Here is a 485-residue protein sequence, read N- to C-terminus: Glucose-6-phosphate 1-dehydrogenase (485 aa).

NADP(+)-binding positions include Arg-46, 89 to 90, and Lys-144; that span reads DI. Substrate-binding residues include His-174, Lys-178, Glu-212, and Asp-231. His-236 acts as the Proton acceptor in catalysis. Lys-334 is a substrate binding site.

It belongs to the glucose-6-phosphate dehydrogenase family.

The enzyme catalyses D-glucose 6-phosphate + NADP(+) = 6-phospho-D-glucono-1,5-lactone + NADPH + H(+). Its pathway is carbohydrate degradation; pentose phosphate pathway; D-ribulose 5-phosphate from D-glucose 6-phosphate (oxidative stage): step 1/3. Functionally, catalyzes the oxidation of glucose 6-phosphate to 6-phosphogluconolactone. The sequence is that of Glucose-6-phosphate 1-dehydrogenase from Zymomonas mobilis subsp. mobilis (strain ATCC 31821 / ZM4 / CP4).